The primary structure comprises 148 residues: Cell division protein SepF (148 aa).

It belongs to the SepF family. Homodimer. Interacts with FtsZ.

It localises to the cytoplasm. Its function is as follows. Cell division protein that is part of the divisome complex and is recruited early to the Z-ring. Probably stimulates Z-ring formation, perhaps through the cross-linking of FtsZ protofilaments. Its function overlaps with FtsA. In Alkaliphilus metalliredigens (strain QYMF), this protein is Cell division protein SepF.